A 461-amino-acid chain; its full sequence is Cyclin-A2-4 (461 aa).

It belongs to the cyclin family. Cyclin AB subfamily.

This chain is Cyclin-A2-4 (CYCA2-4), found in Arabidopsis thaliana (Mouse-ear cress).